A 213-amino-acid polypeptide reads, in one-letter code: Thymidylate kinase (213 aa).

10 to 17 (GLEGAGKT) is a binding site for ATP.

This sequence belongs to the thymidylate kinase family.

It carries out the reaction dTMP + ATP = dTDP + ADP. In terms of biological role, phosphorylation of dTMP to form dTDP in both de novo and salvage pathways of dTTP synthesis. In Escherichia coli O7:K1 (strain IAI39 / ExPEC), this protein is Thymidylate kinase.